Consider the following 1742-residue polypeptide: MWPAGAGTKLPCPRDSALRRAAFSGNLTALPSHLVPAGRSVRVFISANPEDTGAERQALRETVYPKLREFCRENYGLEFQVIDLYWGIEEDEWDSPELQKMRMKLLEECLKTSAGPCFVGLLGEKYGNIRIPGEVEASEFEMILDAAVEAKLETKLLEDWYCRDENSVPAAYYLRPRLEVPRSNKNSTQPSASSEQERPWQEISDEIKTIFKAAVKLLHEQGKMKQSQAKRYLFSAIEDEFDFALGKQTPAFLKKCVCYIRKIANIERFVKIPEMGKYMDITGTDPRIVRDPEAQEKLIKLRDEFIPTIVASSNLRVYTSVTHCDMKLGYSQEIENHYIEGLGKQFYEDMIDIIQATVQQNFDTETDTLYDEILQHSSLCKTYASFYEYKCESLNILHKYILPSKTGHINPLVVYGGPCTGKTLLLAEVAKKAYGWLHEDTGPDSDPVVIVRFLGTTDMSIDLRTLLLSVCEQLAVNYRCLVQSFPKKIHDLRDLFINLLNESSLQRPLVIILDALEQLSEADEARKLWWLPAHLPRFVRIILSTLPNKHGILQKLRCLIHEEDNYIELIPRDRKMCSQVLKHQLLRVKRKVTSGQQIYVNNAFSKCTLPMFVNLTFREVRHWRSHKDVDESSLCVTVHESIEQLFWSLEKKCGQKLVSRALGYITMAKMGLSEMELEDVLALDNSVMNELNENTRPSNPLRVPYLYIARLKEGLNGYLIERHVKNVTLLVWANRHLQLIAQKLYLQEDSNLREMHTILADYFLGVWSGGRRKAFCLEDPYLNGCLDLENRSLLEEEKHFMEQASFDRQAPDQPWVFQCNPLEPDIFFVNHRKMSELLYHLTRCGKTDDLLYGIIMNFSWLYTMIKIGQFDKVLADIELAYNYSQEKELKFLASTLRSIRNKVIAFPGSLSAELQQRLLPVVSSLPKLRHLLLECDKDGPKYCSIVPLHSSMDVTYSPERLPLASSHLHVTEILPTCNPSTVLTALENGSISTWDVETRQLLRQITTAQSVILGMKLSSDEKYLVVATTNNTLLIYDNVNSCLLSEVEIKGTKHGSGSTYINGFTLSVNHALAWLEASKDVTVIDLLYGWPLYQFHCWYEVTCVQCSLDGVYAFCGQYLNNTTIFHLGSGEKICTVTSEFSGGFVKFLLILDTAQEMVMVDSEGSLSVWNTEDISNPQLTEDFDCRKEDSEVVSIELSEDQSAILICKALSIELLDTGMWKVAEKFRARHNERFVSAVLSKNGDCIIATMENTPAVFFWRRDTGQCLASLQESSGTIVKLVKSSHHNMLLSLSTSGVLSIWDIDIITAMSNIDKTGKPIQSLVLPARGEIIYSLDGSDCVHKWNFSSGFIEAVFKHEGIVEHCVLTSTGDLMVTSDDKSSQYVWHTSSGENLFRINGQRISQLLITHNDQFVVSLCEENASRVWRLATGHRVCNILTTLQNAFITSANTFVVGMTKSKVLAVSLWTGSITKKFCCEDGITIVNFKLIPDCPDVIVFITSAETVNLWSLTDEVICRRVQLPSNFLKNLEDFEISPNGKLGIISRGDENINVLDLHSGKLRVVHASGVIWRQRLSRDGRYLVYICFRNGEEEEENDAISSLIVMRLADGKNIGACSLYKTPTFLALSQRHLNIIVGFDDGSIGIYTVVDRVDAALKIKIATSNSRQIFNNATQTSRPKSNSYSFKVSVDCLWRESTEVFARDSPITVSDSSESNEATPSKKHNSCYDRVCAALESRSHSYTPDN.

LRR repeat units lie at residues 386–410 (FYEY…GHIN), 677–698 (LEDV…TRPS), 724–747 (VKNV…LYLQ), 883–906 (YSQE…VIAF), and 925–953 (LPKL…SSMD). The NACHT domain occupies 410-737 (NPLVVYGGPC…TLLVWANRHL (328 aa)). 11 WD repeats span residues 963–1004 (LASS…LLRQ), 1007–1046 (TAQS…LLSE), 1140–1179 (FSGG…NPQL), 1229–1271 (RHNE…ASLQ), 1272–1311 (ESSG…AMSN), 1314–1353 (KTGK…IEAV), 1355–1394 (KHEG…NLFR), 1396–1434 (NGQR…RVCN), 1476–1516 (EDGI…ICRR), 1522–1561 (NFLK…LRVV), and 1614–1653 (SLYK…DAAL). Residues 1702–1721 (PITVSDSSESNEATPSKKHN) are disordered. Positions 1703–1715 (ITVSDSSESNEAT) are enriched in polar residues.

The sequence is that of NACHT and WD repeat domain-containing protein 2 (Nwd2) from Mus musculus (Mouse).